Consider the following 352-residue polypeptide: Desmethylxanthohumol 6'-O-methyltransferase (352 aa).

D219 contacts S-adenosyl-L-methionine. The active-site Proton acceptor is the H257.

The protein belongs to the class I-like SAM-binding methyltransferase superfamily. Cation-independent O-methyltransferase family. In terms of assembly, homodimer. In terms of tissue distribution, highly expressed in lupulin glands. Detected in early-, mid- and late-stage cones.

The protein localises to the cytoplasm. It carries out the reaction desmethylxanthohumol + S-adenosyl-L-methionine = xanthohumol + S-adenosyl-L-homocysteine + H(+). The enzyme catalyses xanthogalenol + S-adenosyl-L-methionine = 4'-O-methylxanthohumol + S-adenosyl-L-homocysteine + H(+). The protein operates within secondary metabolite biosynthesis. Its activity is regulated as follows. Inhibited by S-adenosyl homocysteine. In terms of biological role, involved in the biosynthesis of prenylated phenolics natural products which contribute to the bitter taste of beer and display broad biological activities. Catalyzes the biosynthesis of xanthohumol. Methylates desmethylxanthohumol and xanthogalenol, but not caffeic acid, prenylflavanones, simple phenols or phenylpropanoids. This chain is Desmethylxanthohumol 6'-O-methyltransferase, found in Humulus lupulus (European hop).